The sequence spans 174 residues: CEN-like protein 1 (174 aa).

It belongs to the phosphatidylethanolamine-binding protein family. As to expression, expressed in vegetative axillary meristems but not in the main shoot meristem.

The protein localises to the cytoplasm. Functionally, may form complexes with phosphorylated ligands by interfering with kinases and their effectors. This chain is CEN-like protein 1 (CET1), found in Nicotiana tabacum (Common tobacco).